Consider the following 497-residue polypeptide: MTDLHPARTRVAPSPTGDPHVGTAYMALFDKAWAQRTGGQFVLRIEDTDRTRLVADSEDQIYQTLEWLGLSPDESPLVGGPYEPYKQSERLDTYKPLVEKLIESGHAYRCWCSQERLKQLREERAAAKSPETGYDRMCLGMSKEERAKLPGFTETPVVRMLIPEDVDLEFDDLIRGTVRAPRPDDQVILKADGFPTYHMAVVVDDHLMGIDTVVRGEEWISSTPKHLLLYKWLGWEAPKFAHMPLLRNTDKSKISKRKNPAARLMWFREQGYLPEALRNFLQLLAYPTVAEGQEMEDFDSFVSRFDWGNVSTGGPVFDVTKLDWLNGQYIRSLDAEVLTDRVLDYADQMCQARHVLGRDLTQEDRCVIHAAMPLVRERLTLLSEALPKLAFLLTDDDALVFDEDSVAKLKAGADDIQHAAVEVLKGLDDFSADAIQAALRARLCDEMGIKPRLAFAPVRVAVTGSRVSPPLFEAMEILGKESTLRRMQRFEAEIDQK.

A 'HIGH' region motif is present at residues 13-23 (PSPTGDPHVGT). Residues 253 to 257 (KISKR) carry the 'KMSKS' region motif. K256 contacts ATP.

Belongs to the class-I aminoacyl-tRNA synthetase family. Glutamate--tRNA ligase type 1 subfamily. As to quaternary structure, monomer.

Its subcellular location is the cytoplasm. The catalysed reaction is tRNA(Glu) + L-glutamate + ATP = L-glutamyl-tRNA(Glu) + AMP + diphosphate. Catalyzes the attachment of glutamate to tRNA(Glu) in a two-step reaction: glutamate is first activated by ATP to form Glu-AMP and then transferred to the acceptor end of tRNA(Glu). The sequence is that of Glutamate--tRNA ligase from Cutibacterium acnes (strain DSM 16379 / KPA171202) (Propionibacterium acnes).